Reading from the N-terminus, the 471-residue chain is Glutamate--tRNA ligase (471 aa).

The short motif at 9–19 (PSPTGYLHVGG) is the 'HIGH' region element. Zn(2+) is bound by residues cysteine 98, cysteine 100, cysteine 125, and histidine 127. A 'KMSKS' region motif is present at residues 237 to 241 (KLSKR). Residue lysine 240 coordinates ATP.

This sequence belongs to the class-I aminoacyl-tRNA synthetase family. Glutamate--tRNA ligase type 1 subfamily. Monomer. Requires Zn(2+) as cofactor.

It localises to the cytoplasm. The catalysed reaction is tRNA(Glu) + L-glutamate + ATP = L-glutamyl-tRNA(Glu) + AMP + diphosphate. Functionally, catalyzes the attachment of glutamate to tRNA(Glu) in a two-step reaction: glutamate is first activated by ATP to form Glu-AMP and then transferred to the acceptor end of tRNA(Glu). This is Glutamate--tRNA ligase from Shigella flexneri.